The chain runs to 372 residues: Chaperone protein DnaJ (372 aa).

In terms of domain architecture, J spans 5-70; it reads DYYDVLGVER…QKRANYDQYG (66 aa). The CR-type zinc-finger motif lies at 130–208; sequence GTTKDIQINT…CHGDGRVHKK (79 aa). Zn(2+) is bound by residues C143, C146, C160, C163, C182, C185, C196, and C199. 4 CXXCXGXG motif repeats span residues 143 to 150, 160 to 167, 182 to 189, and 196 to 203; these read CDSCDGSG, CSTCHGAG, CPSCHGSG, and CKSCHGDG.

Belongs to the DnaJ family. Homodimer. Zn(2+) is required as a cofactor.

The protein resides in the cytoplasm. In terms of biological role, participates actively in the response to hyperosmotic and heat shock by preventing the aggregation of stress-denatured proteins and by disaggregating proteins, also in an autonomous, DnaK-independent fashion. Unfolded proteins bind initially to DnaJ; upon interaction with the DnaJ-bound protein, DnaK hydrolyzes its bound ATP, resulting in the formation of a stable complex. GrpE releases ADP from DnaK; ATP binding to DnaK triggers the release of the substrate protein, thus completing the reaction cycle. Several rounds of ATP-dependent interactions between DnaJ, DnaK and GrpE are required for fully efficient folding. Also involved, together with DnaK and GrpE, in the DNA replication of plasmids through activation of initiation proteins. The sequence is that of Chaperone protein DnaJ from Pasteurella multocida (strain Pm70).